We begin with the raw amino-acid sequence, 193 residues long: Thioredoxin reductase-like selenoprotein T1a (193 aa).

The signal sequence occupies residues 1 to 21; it reads MRWLPFSALLLWALCLHSASA. The segment at residues 44–47 is a cross-link (cysteinyl-selenocysteine (Cys-Sec)); that stretch reads CVSU. A non-standard amino acid (selenocysteine) is located at residue Sec-47. The chain crosses the membrane as a helical span at residues 83 to 101; sequence IASFLSMFKLLLIGVIILG.

This sequence belongs to the SelWTH family. Selenoprotein T subfamily. Post-translationally, may contain a selenide-sulfide bond between Cys-44 and Sec-47. This bond is speculated to serve as redox-active pair. Expressed in embryonic olfactory vesicles and the photoreceptor cell layer of the embryonic retina. Low level in embryonic epiphysis.

Its subcellular location is the endoplasmic reticulum membrane. The enzyme catalyses [thioredoxin]-dithiol + NADP(+) = [thioredoxin]-disulfide + NADPH + H(+). Selenoprotein with thioredoxin reductase-like oxidoreductase activity. In Danio rerio (Zebrafish), this protein is Thioredoxin reductase-like selenoprotein T1a.